A 59-amino-acid polypeptide reads, in one-letter code: UPF0434 protein LHK_01103 (59 aa).

This sequence belongs to the UPF0434 family.

This Laribacter hongkongensis (strain HLHK9) protein is UPF0434 protein LHK_01103.